Reading from the N-terminus, the 40-residue chain is Metallothionein-1 (40 aa).

This sequence belongs to the metallothionein superfamily. Type 5 family.

Functionally, this protein binds cations of several transition elements. It is thought to be involved in detoxification processes. The sequence is that of Metallothionein-1 (MtnA) from Drosophila ananassae (Fruit fly).